Consider the following 352-residue polypeptide: Minor capsid protein VP2 (352 aa).

G2 is lipidated: N-myristoyl glycine; by host. Residues 273 to 308 (SGEFIEKFEAPGGANQRTAPQWMLPLLLGLYGSVTS) form a D1 region. The chain crosses the membrane as a helical span at residues 290-310 (TAPQWMLPLLLGLYGSVTSAL). Residues 313–352 (YEDGPNKKKRKLSRGSSQKTKGTSASAKARHKRRNRSSRS) form a disordered region. A DNA-binding region spans residues 313 to 352 (YEDGPNKKKRKLSRGSSQKTKGTSASAKARHKRRNRSSRS). A Nuclear localization signal motif is present at residues 316-324 (GPNKKKRKL). Residues 326–338 (RGSSQKTKGTSAS) show a composition bias toward polar residues. Residues 340 to 352 (KARHKRRNRSSRS) are compositionally biased toward basic residues.

It belongs to the polyomaviruses capsid protein VP2 family. In terms of assembly, forms homooligomers, and heterooligomers with VP3 in the endoplasmic reticulum membrane. Interacts (via D1 domain) with VP1. As to quaternary structure, interacts (via D1 domain) with VP1. Interacts (via C-terminus) with host SP1, this is probably also the case for VP2; this interaction represses SP1 activation of the SV40 early promoter and participates in virion assembly. Interacts (via nuclear localization signal) with host importin alpha2-beta heterodimer. Oligomerizes with VP3 in the nucleus.

The protein resides in the virion. Its subcellular location is the host nucleus. It localises to the host endoplasmic reticulum. It is found in the host endoplasmic reticulum membrane. Structural protein that resides within the core of the capsid surrounded by 72 VP1 pentamers. Following virus endocytosis and trafficking to the endoplasmic reticulum, VP2 and VP3 form oligomers and integrate into the endoplasmic reticulum membrane. Heterooligomer VP2-VP3 may create a viroporin for transporting the viral genome across the endoplasmic reticulum membrane to the cytoplasm. Nuclear entry of the viral DNA involves the selective exposure and importin recognition of VP2 or VP3 nuclear localization signal (shared C-terminus). Plays a role in virion assembly within the nucleus in particular through a DNA-binding domain located in the C-terminal region. An N-terminal myristoylation suggests a scaffold function for virion assembly. The viral progenies exit the cells by lytic release. Isoform VP2 may repress SP1 activation of the SV40 early promoter, via specific protein-protein and protein-DNA interactions. In terms of biological role, structural protein that resides within the core of the capsid surrounded by 72 VP1 pentamers. Following virus entry, VP2 and VP3 form oligomers and integrate into the endoplasmic reticulum membrane. Heterooligomer VP2-VP3 may create a viroporin for transporting the viral genome across the endoplasmic reticulum membrane. Essential for focus formation and virus endoplasmic reticulum-to-cytosol membrane transport, required to recruit selective cellular components to the foci in the ER membrane. Nuclear entry of the viral DNA involves the selective exposure and importin recognition of VP2 or VP3 nuclear localization signal (shared C-terminus). Isoform VP3 represses SP1 activation of the SV40 early promoter, via specific protein-protein and protein-DNA interactions. SP1 additionally participates in recruiting VP3 to the SV40 minichromosome during SV40 assembly. Plays a role in virion assembly within the nucleus. May initiate host cell lysis when associated with VP4. Functionally, viroporin inducing perforation of cellular membranes to trigger virus progeny release. Forms pores of 3 nm inner diameter. VP4 is expressed about 24 hours after the late structural proteins and is not incorporated into the mature virion. The sequence is that of Minor capsid protein VP2 from Simian virus 40 (SV40).